The following is a 1469-amino-acid chain: MQPFKRRALTSDDDRPYADTDSMPEVDLDVDRRRQYMEQLNIFDDVSSGAYMLELEAAENGVKYDEKEDLLNVQIPPKYEDQISDPDGNRMIILNIYVENFKSYAGKHILGPFHKNLTMILGPNGSGKSNVIDALLFVFGFKAGKIRTKKLSALINSGGNYESCSVTIMFQMVKDMPVENYDKYEVLTDNCVCITRTINRENNSKYRIDDKDASQKDVQELLLRAGIDMTHNRFLILQGEVEAIALMKPTSKNPNEEGMLEYIEDIVGTNRFVAPISKLMHRVSLLEHKSSQYGASVRRHEGHLKVFEKAMVIGMAYLNTFNNLNYLRGIRVKHNLCRYAETMRDAKMSLVTRTGELEENKDIMLEAKDEVRKKETHERSLNSIVTELENKRIDWQSKKNDWHARDAKRKQGLKSCTQDLGKLMKERDEARREKFEIETAPENARISKQNMQLEWDQLKEQENVCQRTATENLIKYDQKSSADRAKHDDLEKKLSDELLQSMRAKAELDVSESELKDMTIMMEQGQKRVDELKGTLQTMMAENIRDNTELNAVTTELQDRKLKFDKAVEKLPHLKSTEQLLRSKKYELDQEVIEASNTQEVTYRHQATAKLHELKEAGLFPGFKGRLGDLASIPIKFDTAISTVFFAQLDYHVVQTSDECRIGIGFCHEYKLPRTTFVFLDHLKDTDTSGMDSTMKFPAERLFDKIHCVNPEIRREFYFLIHDILVVDSLEEATRIDKKYPGRHRYCTLNGSILNRSGALTGGGKPTTGRIRNDNNPNMSGVKKVDLSKLRAAQEKHNHALEAHLKLQLKQEEIRADNGPIIKQLEIRKRELIMSTKEQKTRIAELKSSIAAHERRMVNYREVTVEDLDEKRAQIADLKRQVEESQKSSAKIKQQIEQYKRKMDRMFMELVQKNKDSIEQAKDRMGQLEQDIARQTAIIENNPSHLEQAEKKLSELEHMCLEKRSEADALAQLEVGEDVKGIDIINAQLQTSTASIDAQRARYTEAVAARREADAAYQTTVDNYNMVKQTYDELMRIIDDLENKTMADNAELDIIESAWMQPEKLYPPGKFVRYNDPDIAAKMTDGHVVLPYECISMIEPHREAYEEHEARMLEDDVFEDTANKICKLEKDVDKFRREFDNKGVRDYAMIVSLLMNEVTSAKKFSDKLKAHREKLNELRMARFNEFSEALAFLGTTTQMLYQLITNGGDASLKFVEEGKSTDPFDGGIKFSVRPAKKSWKLIENLSGGEKTLASLCFVFAMHHYRPTPLYVMDEIDAALDLNNVSLIANYIKHSERTRNAQFIIISLRNQMFEVGNRLLGIYKIDGKTYNIMVDPIAVEIKNRPILKIFEEEIKRREKLRRAEIEPEIDLSNGLSNVVIAPKRKQRRLEMLKLSDFGLDDDSDLPEFNRFPPATRRELSVEDSDEDDEPVRRRPRRQVEEEDEEDELIEEATPSPPPIVVQRRVRRSRH.

Positions 1–25 (MQPFKRRALTSDDDRPYADTDSMPE) are disordered. Positions 9–18 (LTSDDDRPYA) are enriched in basic and acidic residues. Residue 122–129 (GPNGSGKS) coordinates ATP. Positions 356 to 542 (ELEENKDIML…KGTLQTMMAE (187 aa)) form a coiled coil. Residues 621-736 (PGFKGRLGDL…VDSLEEATRI (116 aa)) form the SMC hinge domain. Positions 758–781 (GALTGGGKPTTGRIRNDNNPNMSG) are disordered. Coiled coils occupy residues 805–974 (LKLQ…AQLE), 1016–1056 (AYQT…DIIE), and 1159–1182 (TSAK…RMAR). The interval 1404–1469 (LPEFNRFPPA…VQRRVRRSRH (66 aa)) is disordered. The span at 1439-1449 (EEEDEEDELIE) shows a compositional bias: acidic residues.

It belongs to the SMC family. SMC4 subfamily. In terms of assembly, component of the dosage compensation complex, which contains the mix-1/SMC2 and dpy-27/SMC4 heterodimer, and three non SMC subunits that probably regulate the complex: dpy-26, capg-1 and dpy-28. Within the complex, interacts with dpy-28, mix-1, dpy-26 and capg-1. Interacts with dpy-21. Interacts with dpy-28; the interaction is required for dpy-28 protein stability and dpy-28 association with the X chromosome. Interacts with smcl-1.

The protein localises to the nucleus. It is found in the chromosome. Central component of the condensin I-like dosage compensation complex that associates specifically with hermaphrodite X chromosomes to reduce their gene transcription throughout development. Its strong similarity with the condensin subunit smc4 suggests that it may reduce the X-chromosome transcript level by condensing the chromatin structure during interphase. Involved in the recruitment of the dosage compensation proteins mix-1 and dpy-21 to the X chromosome. Might be involved in the reduction of histone H4 lysine 16 acetylation (H4K16ac) on dosage compensated X chromosomes. As a member of the dosage compensation complex, also binds to regulatory regions of the autosomal her-1 gene, required for male development, possibly contributing to its repression in hermaphrodites. Also plays a role in the regulation of growth and body fat metabolism downstream of the TOR complex 2 pathway. The polypeptide is Chromosome condensation protein dpy-27 (dpy-27) (Caenorhabditis elegans).